Reading from the N-terminus, the 415-residue chain is Translation initiation factor 2 subunit gamma (415 aa).

The 200-residue stretch at 7 to 206 folds into the tr-type G domain; the sequence is QPEVNIGVVG…GIEEYIKTPY (200 aa). The segment at 16-23 is G1; the sequence is GHVDHGKT. Mg(2+)-binding residues include aspartate 19, threonine 23, glycine 44, and threonine 46. GTP is bound at residue 19–24; sequence DHGKTT. Residues 44–48 are G2; that stretch reads GMTIK. Positions 59, 62, 74, and 77 each coordinate Zn(2+). Positions 93–96 are G3; the sequence is DAPG. Residues 149–152 and 184–186 contribute to the GTP site; these read NKVD and SAL. Positions 149-152 are G4; sequence NKVD. The G5 stretch occupies residues 184–186; it reads SAL.

Belongs to the TRAFAC class translation factor GTPase superfamily. Classic translation factor GTPase family. EIF2G subfamily. In terms of assembly, heterotrimer composed of an alpha, a beta and a gamma chain. The cofactor is Mg(2+).

The catalysed reaction is GTP + H2O = GDP + phosphate + H(+). EIF-2 functions in the early steps of protein synthesis by forming a ternary complex with GTP and initiator tRNA. The protein is Translation initiation factor 2 subunit gamma of Saccharolobus solfataricus (strain ATCC 35092 / DSM 1617 / JCM 11322 / P2) (Sulfolobus solfataricus).